Consider the following 1020-residue polypeptide: Tetrathionate reductase subunit A (1020 aa).

The segment at residues 1-33 (MANLTRRQWLKVGLAVGGMVTFGLSYRDVAKRA) is a signal peptide (tat-type signal). One can recognise a 4Fe-4S Mo/W bis-MGD-type domain in the interval 71–154 (QTIAMTQCFG…TLLESLYSPL (84 aa)). 4 residues coordinate [4Fe-4S] cluster: cysteine 78, cysteine 81, cysteine 85, and cysteine 140.

This sequence belongs to the prokaryotic molybdopterin-containing oxidoreductase family. Probably composed of three subunits: TtrA, TtrB and TtrC. It depends on [4Fe-4S] cluster as a cofactor. Mo-bis(molybdopterin guanine dinucleotide) is required as a cofactor. In terms of processing, predicted to be exported by the Tat system. The position of the signal peptide cleavage has not been experimentally proven.

Its subcellular location is the periplasm. The protein resides in the cell inner membrane. Its function is as follows. Part of a membrane-bound tetrathionate reductase that catalyzes the reduction of tetrathionate to thiosulfate. TtrA is the catalytic subunit. During mice infection, the ability to use tetrathionate as an electron acceptor is a growth advantage for S.typhimurium over the competing microbiota in the lumen of the inflamed gut. This chain is Tetrathionate reductase subunit A (ttrA), found in Salmonella typhimurium (strain LT2 / SGSC1412 / ATCC 700720).